Consider the following 617-residue polypeptide: uncharacterized protein (617 aa).

Low complexity-rich tracts occupy residues 1–16 (MSKC…SNSS) and 36–45 (STTSSNGSNS). The segment at 1 to 49 (MSKCATPTPSTSSNSSDEAKRSPQPMSRGFPQRNMSTTSSNGSNSPRHR) is disordered. 3 helical membrane-spanning segments follow: residues 219–239 (LMIG…GGLA), 262–282 (TAGA…FTGY), and 427–447 (PITL…LLTM).

It belongs to the TMCO4 family.

The protein localises to the membrane. This is an uncharacterized protein from Caenorhabditis elegans.